We begin with the raw amino-acid sequence, 200 residues long: 3-isopropylmalate dehydratase small subunit (200 aa).

The protein belongs to the LeuD family. LeuD type 1 subfamily. As to quaternary structure, heterodimer of LeuC and LeuD.

It carries out the reaction (2R,3S)-3-isopropylmalate = (2S)-2-isopropylmalate. It functions in the pathway amino-acid biosynthesis; L-leucine biosynthesis; L-leucine from 3-methyl-2-oxobutanoate: step 2/4. In terms of biological role, catalyzes the isomerization between 2-isopropylmalate and 3-isopropylmalate, via the formation of 2-isopropylmaleate. The sequence is that of 3-isopropylmalate dehydratase small subunit from Campylobacter jejuni (strain RM1221).